We begin with the raw amino-acid sequence, 453 residues long: Probable glycine dehydrogenase (decarboxylating) subunit 1 (453 aa).

This sequence belongs to the GcvP family. N-terminal subunit subfamily. As to quaternary structure, the glycine cleavage system is composed of four proteins: P, T, L and H. In this organism, the P 'protein' is a heterodimer of two subunits.

It catalyses the reaction N(6)-[(R)-lipoyl]-L-lysyl-[glycine-cleavage complex H protein] + glycine + H(+) = N(6)-[(R)-S(8)-aminomethyldihydrolipoyl]-L-lysyl-[glycine-cleavage complex H protein] + CO2. In terms of biological role, the glycine cleavage system catalyzes the degradation of glycine. The P protein binds the alpha-amino group of glycine through its pyridoxal phosphate cofactor; CO(2) is released and the remaining methylamine moiety is then transferred to the lipoamide cofactor of the H protein. In Erythrobacter litoralis (strain HTCC2594), this protein is Probable glycine dehydrogenase (decarboxylating) subunit 1.